The chain runs to 742 residues: Synaptic vesicle glycoprotein 2A (742 aa).

An interaction with SYT1 region spans residues 1–57; the sequence is MEEGFRDRAAFIRGAKDIAKEVKKHAAKKVVKGLDRVQDEYSRRSYSRFEEEDDDDD. At 1-169 the chain is on the cytoplasmic side; it reads MEEGFRDRAA…GHGRFQWTLY (169 aa). Over residues 40–49 the composition is skewed to basic and acidic residues; that stretch reads EYSRRSYSRF. Residues 40–145 are disordered; that stretch reads EYSRRSYSRF…RGEAQRRKDR (106 aa). Phosphoserine is present on residues S80 and S81. T84 is subject to Phosphothreonine. The span at 122 to 137 shows a compositional bias: gly residues; it reads VRGGLSDGEGPPGGRG. Position 127 is a phosphoserine (S127). A helical membrane pass occupies residues 170 to 190; the sequence is FVLGLALMADGVEVFVVGFVL. Topologically, residues 191–205 are extracellular; that stretch reads PSAEKDMCLSDSNKG. The chain crosses the membrane as a helical span at residues 206–226; the sequence is MLGLIVYLGMMVGAFLWGGLA. Residues 227–233 lie on the Cytoplasmic side of the membrane; the sequence is DRLGRRQ. Residues 234–254 form a helical membrane-spanning segment; that stretch reads CLLISLSVNSVFAFFSSFVQG. The Extracellular segment spans residues 255–262; the sequence is YGTFLFCR. A helical membrane pass occupies residues 263–283; that stretch reads LLSGVGIGGSIPIVFSYFSEF. Residues 284 to 294 are Cytoplasmic-facing; sequence LAQEKRGEHLS. The chain crosses the membrane as a helical span at residues 295–315; it reads WLCMFWMIGGVYAAAMAWAII. Residues 316 to 334 are Extracellular-facing; sequence PHYGWSFQMGSAYQFHSWR. Residues 335–355 form a helical membrane-spanning segment; sequence VFVLVCAFPSVFAIGALTTQP. Over 356–447 the chain is Cytoplasmic; the sequence is ESPRFFLENG…CFSPEYRRIT (92 aa). The residue at position 393 (S393) is a Phosphoserine. Residues 448 to 468 form a helical membrane-spanning segment; sequence LMMMGVWFTMSFSYYGLTVWF. Topologically, residues 469–598 are extracellular; sequence PDMIRHLQAV…GTGEGAYMVY (130 aa). Y480 bears the Phosphotyrosine mark. Residues N498, N548, and N573 are each glycosylated (N-linked (GlcNAc...) asparagine). A helical transmembrane segment spans residues 599-619; that stretch reads FVSFLGTLAVLPGNIVSALLM. The Cytoplasmic portion of the chain corresponds to 620-626; it reads DKIGRLR. A helical transmembrane segment spans residues 627–647; sequence MLAGSSVLSCVSCFFLSFGNS. The Extracellular portion of the chain corresponds to 648–651; the sequence is ESAM. Residues 652-672 form a helical membrane-spanning segment; the sequence is IALLCLFGGVSIASWNALDVL. At 673–685 the chain is on the cytoplasmic side; sequence TVELYPSDKRTTA. The helical transmembrane segment at 686–708 threads the bilayer; that stretch reads FGFLNALCKLAAVLGISIFTSFV. Over 709–712 the chain is Extracellular; the sequence is GITK. Residues 713 to 731 form a helical membrane-spanning segment; sequence AAPILFASAALALGSSLAL. Over 732-742 the chain is Cytoplasmic; it reads KLPETRGQVLQ.

The protein belongs to the major facilitator superfamily. In terms of assembly, interacts with SYT1/synaptotagmin-1 in a calcium-dependent manner. Binds the adapter protein complex AP-2. (Microbial infection) Interacts with C.botulinum neurotoxin type A (BoNT/A, botA). In terms of processing, phosphorylation by CK1 of the N-terminal cytoplasmic domain regulates interaction with SYT1. Post-translationally, N-glycosylated. In terms of tissue distribution, expressed in conventional synapses and cone ribbon synapses in the retina (at protein level). Expressed in diaphragm motor nerve terminals (at protein level). Expressed in hippocampus neurons (at protein level).

Its subcellular location is the presynapse. The protein resides in the cytoplasmic vesicle. It is found in the secretory vesicle. The protein localises to the synaptic vesicle membrane. In terms of biological role, plays a role in the control of regulated secretion in neural and endocrine cells, enhancing selectively low-frequency neurotransmission. Positively regulates vesicle fusion by maintaining the readily releasable pool of secretory vesicles. (Microbial infection) Receptor for C.botulinum neurotoxin type A (BoNT/A, botA); the toxin probably binds via extracellular loop 4. Its function is as follows. (Microbial infection) Possible receptor for C.botulinum neurotoxin type D (BoNT/D, botD); BoNT/D does not bind to extracellular loop 4 as do BoNT/A and BoNT/E. Functionally, (Microbial infection) Receptor for C.botulinum neurotoxin type E (BoNT/E); the toxin probably binds via extracellular loop 4. It probably requires glycosylation of Asn-573. This chain is Synaptic vesicle glycoprotein 2A (Sv2a), found in Mus musculus (Mouse).